Here is a 115-residue protein sequence, read N- to C-terminus: NADH-ubiquinone oxidoreductase chain 3 (115 aa).

3 helical membrane passes run 4-24, 55-75, and 87-107; these read LTAL…AFWL, FFLV…LLPL, and MMLT…YEWM.

This sequence belongs to the complex I subunit 3 family. As to quaternary structure, core subunit of respiratory chain NADH dehydrogenase (Complex I) which is composed of 45 different subunits. Interacts with TMEM186. Interacts with TMEM242.

The protein localises to the mitochondrion inner membrane. The enzyme catalyses a ubiquinone + NADH + 5 H(+)(in) = a ubiquinol + NAD(+) + 4 H(+)(out). Core subunit of the mitochondrial membrane respiratory chain NADH dehydrogenase (Complex I) which catalyzes electron transfer from NADH through the respiratory chain, using ubiquinone as an electron acceptor. Essential for the catalytic activity of complex I. In Peromyscus boylii (Brush deermouse), this protein is NADH-ubiquinone oxidoreductase chain 3.